The following is a 242-amino-acid chain: Interleukin-34 (242 aa).

The first 20 residues, 1 to 20 (MPRGFTWLRYLGIFLGVALG), serve as a signal peptide directing secretion. Residue Asn-76 is glycosylated (N-linked (GlcNAc...) asparagine). The disordered stretch occupies residues 210-242 (TQLYPPPPWSPSSPPHSTGSVRPVRAQGEGLLP). Positions 213 to 223 (YPPPPWSPSSP) are enriched in pro residues.

The protein belongs to the IL-34 family. As to quaternary structure, homodimer. Interacts with CSF1R. In terms of tissue distribution, detected in the sinusoidal epithelium in the red pulp of spleen (at protein level). Predominantly expressed in spleen. Also detected in a range of other tissues including heart, brain, lung, liver, kidney, thymus, testis, ovary, small intestine, prostate and colon.

Its subcellular location is the secreted. In terms of biological role, cytokine that promotes the proliferation, survival and differentiation of monocytes and macrophages. Promotes the release of pro-inflammatory chemokines, and thereby plays an important role in innate immunity and in inflammatory processes. Plays an important role in the regulation of osteoclast proliferation and differentiation, and in the regulation of bone resorption. Signaling via CSF1R and its downstream effectors stimulates phosphorylation of MAPK1/ERK2 AND MAPK3/ERK1. The polypeptide is Interleukin-34 (IL34) (Homo sapiens (Human)).